Consider the following 356-residue polypeptide: Protein RecA (356 aa).

68–75 (GQESSGKT) contributes to the ATP binding site.

The protein belongs to the RecA family.

The protein resides in the cytoplasm. In terms of biological role, can catalyze the hydrolysis of ATP in the presence of single-stranded DNA, the ATP-dependent uptake of single-stranded DNA by duplex DNA, and the ATP-dependent hybridization of homologous single-stranded DNAs. It interacts with LexA causing its activation and leading to its autocatalytic cleavage. This chain is Protein RecA, found in Thermotoga maritima (strain ATCC 43589 / DSM 3109 / JCM 10099 / NBRC 100826 / MSB8).